Consider the following 152-residue polypeptide: D-aminoacyl-tRNA deacylase (152 aa).

The Gly-cisPro motif, important for rejection of L-amino acids motif lies at 142–143; the sequence is GP.

This sequence belongs to the DTD family. Homodimer.

It is found in the cytoplasm. It carries out the reaction glycyl-tRNA(Ala) + H2O = tRNA(Ala) + glycine + H(+). It catalyses the reaction a D-aminoacyl-tRNA + H2O = a tRNA + a D-alpha-amino acid + H(+). Functionally, an aminoacyl-tRNA editing enzyme that deacylates mischarged D-aminoacyl-tRNAs. Also deacylates mischarged glycyl-tRNA(Ala), protecting cells against glycine mischarging by AlaRS. Acts via tRNA-based rather than protein-based catalysis; rejects L-amino acids rather than detecting D-amino acids in the active site. By recycling D-aminoacyl-tRNA to D-amino acids and free tRNA molecules, this enzyme counteracts the toxicity associated with the formation of D-aminoacyl-tRNA entities in vivo and helps enforce protein L-homochirality. The sequence is that of D-aminoacyl-tRNA deacylase from Burkholderia lata (strain ATCC 17760 / DSM 23089 / LMG 22485 / NCIMB 9086 / R18194 / 383).